Reading from the N-terminus, the 221-residue chain is Large ribosomal subunit protein uL16A (221 aa).

Belongs to the universal ribosomal protein uL16 family. In terms of assembly, component of the large ribosomal subunit (LSU). Mature yeast ribosomes consist of a small (40S) and a large (60S) subunit. The 40S small subunit contains 1 molecule of ribosomal RNA (18S rRNA) and at least 33 different proteins. The large 60S subunit contains 3 rRNA molecules (25S, 5.8S and 5S rRNA) and at least 46 different proteins.

It localises to the cytoplasm. Its function is as follows. Component of the ribosome, a large ribonucleoprotein complex responsible for the synthesis of proteins in the cell. The small ribosomal subunit (SSU) binds messenger RNAs (mRNAs) and translates the encoded message by selecting cognate aminoacyl-transfer RNA (tRNA) molecules. The large subunit (LSU) contains the ribosomal catalytic site termed the peptidyl transferase center (PTC), which catalyzes the formation of peptide bonds, thereby polymerizing the amino acids delivered by tRNAs into a polypeptide chain. The nascent polypeptides leave the ribosome through a tunnel in the LSU and interact with protein factors that function in enzymatic processing, targeting, and the membrane insertion of nascent chains at the exit of the ribosomal tunnel. This Schizosaccharomyces pombe (strain 972 / ATCC 24843) (Fission yeast) protein is Large ribosomal subunit protein uL16A (rpl1001).